The sequence spans 390 residues: Transcription factor bHLH76 (390 aa).

Residues 147–217 (NVSEDSQSSG…SEKQPSDSLK (71 aa)) form a disordered region. Over residues 207–217 (NSEKQPSDSLK) the composition is skewed to basic and acidic residues. The bHLH domain occupies 229 to 279 (QATNSHSLAERVRREKISERMKFLQDLVPGCDKVTGKAVMLDEIINYVQSL).

In terms of assembly, homodimer. Interacts with IBH1. Binds reversibly to CRY2 after blue light illumination. Expressed constitutively in roots, leaves, stems, and flowers.

The protein localises to the nucleus. Its function is as follows. Transcriptional activator involved in cell elongation. Regulates the expression of a subset of genes involved in cell expansion by binding to the G-box motif. Binds to chromatin DNA of the FT gene and promotes its expression, and thus triggers flowering in response to blue light. The sequence is that of Transcription factor bHLH76 (BHLH76) from Arabidopsis thaliana (Mouse-ear cress).